The chain runs to 1005 residues: Translocated actin-recruiting phosphoprotein (1005 aa).

The span at 1–10 shows a compositional bias: polar residues; that stretch reads MTNSISGYQP. Disordered regions lie at residues 1-36, 73-155, 487-521, 542-626, 671-749, and 792-847; these read MTNSISGYQPTVTTSTSSTTSASGASGSLGASSVST, APNV…SNYD, INWGTQAGPSSEDDGISFSNETPGAGPAAAPSPTP, DTNV…DGPA, GSAQ…GPSG, and TGTS…TSLM. 2 stretches are compositionally biased toward low complexity: residues 11 to 36 and 73 to 121; these read TVTTSTSSTTSASGASGSLGASSVST and APNV…SSDH. The segment covering 130-154 has biased composition (polar residues); sequence GSNSGDISNNYDDVGSNNGDISSNY. Composition is skewed to low complexity over residues 542–578, 593–612, 720–736, and 831–846; these read DTNVNTTNTTPTTQSTDASTDTSDIDDINTNNQTDDI, GDISETESSSGDDSGSVSSS, SSSGDESGGVSSPSSES, and STTTLRTGTGATTTSL.

It belongs to the chlamydial CPn_0572/CT_456/TC_0741 family. In terms of processing, phosphorylated on a tyrosine on attachment to the host cell. Tyrosine phosphorylation is temporally and spatially associated with recruitment of actin to the site of chlamydial entry. Phosphorylated Tarp seems to remain cytoplasmically exposed on the inclusion membrane at one side of internalized elementary bodies for several hours after entry.

The protein resides in the secreted. Functionally, appears to initiate or participate in signaling events that regulate the actin recruitment, which ultimately leads to internalization. In Chlamydia trachomatis serovar D (strain ATCC VR-885 / DSM 19411 / UW-3/Cx), this protein is Translocated actin-recruiting phosphoprotein (tarP).